A 221-amino-acid polypeptide reads, in one-letter code: GFP-like non-fluorescent chromoprotein (221 aa).

A cross-link (2-iminomethyl-5-imidazolinone (Gln-Gly)) is located at residues 62 to 64 (QYG). Tyr63 carries the post-translational modification (E)-2,3-didehydrotyrosine.

It belongs to the GFP family. As to quaternary structure, homotetramer. Post-translationally, contains a chromophore consisting of modified amino acid residues. The chromophore is formed by autocatalytic backbone condensation between Xaa-N and Gly-(N+2), oxidation of Tyr-(N+1) to didehydrotyrosine, and formation of a double bond to the alpha-amino nitrogen of residue Xaa-N. Maturation of the chromophore requires nothing other than molecular oxygen.

In terms of biological role, thought to play a role in photoprotection of the coral's resident symbiont microalgae's photosystems from photoinhibition caused by high light levels found near the surface of coral reefs. The sequence is that of GFP-like non-fluorescent chromoprotein from Montipora efflorescens (Pore coral).